The chain runs to 274 residues: 2,3,4,5-tetrahydropyridine-2,6-dicarboxylate N-succinyltransferase (274 aa).

Positions 104 and 141 each coordinate substrate.

Belongs to the transferase hexapeptide repeat family. In terms of assembly, homotrimer.

The protein localises to the cytoplasm. The enzyme catalyses (S)-2,3,4,5-tetrahydrodipicolinate + succinyl-CoA + H2O = (S)-2-succinylamino-6-oxoheptanedioate + CoA. It participates in amino-acid biosynthesis; L-lysine biosynthesis via DAP pathway; LL-2,6-diaminopimelate from (S)-tetrahydrodipicolinate (succinylase route): step 1/3. This Shewanella oneidensis (strain ATCC 700550 / JCM 31522 / CIP 106686 / LMG 19005 / NCIMB 14063 / MR-1) protein is 2,3,4,5-tetrahydropyridine-2,6-dicarboxylate N-succinyltransferase.